Reading from the N-terminus, the 148-residue chain is MTRVIIDGDACPVVDSVIELTTGTGIFVTILRSFSHYSNKVLPNHVETIYIDDGPDAVDYKIVKLATPEDIVITQDYGLASLLLSKVKIVMHHKGHLYRSSNIDMLLQQRYNNAQIRKQGGRHKGPPPFSKEDKKQFERAFKSVIKQL.

It belongs to the UPF0178 family.

This Staphylococcus haemolyticus (strain JCSC1435) protein is UPF0178 protein SH2212.